We begin with the raw amino-acid sequence, 473 residues long: Histone-lysine N-methyltransferase ATXR2 (473 aa).

Residues Lys33–Ile441 form the SET domain. Residues Glu134–Cys203 form an MYND-type; degenerate zinc finger. Cys176, Cys180, His199, and Cys203 together coordinate Zn(2+). Tyr440 contacts S-adenosyl-L-methionine.

This sequence belongs to the class V-like SAM-binding methyltransferase superfamily. Histone-lysine methyltransferase family. TRX/MLL subfamily. Interacts with JMJ30. Binds to ARF7 and ARF19 in the nucleus.

It is found in the nucleus. It catalyses the reaction L-lysyl-[histone] + S-adenosyl-L-methionine = N(6)-methyl-L-lysyl-[histone] + S-adenosyl-L-homocysteine + H(+). Its function is as follows. Histone methyltransferase that methylates 'Lys-36' (H3K36me) of histone H3 to produce H3K36me3. Promotes early stages of cellular dedifferentiation through H3K36me3-dependent, and to a lesser degree H3K4me3-dependent, activation of Lateral organ Boundaries-Domain (LBD) (e.g. LBD16 and LBD29) genes. Positive regulator of root organogenesis including lateral root formation as well as adventitious root formation from wounded leaf tissues. Recruited by JMJ30/ARF (e.g. ARF7 and ARF19) complexes to promote the deposition of H3K36me3 and, to a lower extent, H3K4me3 at LBD genes promoters, thus ensuring their stable activation during callus formation on callus-inducing medium (CIM). This Arabidopsis thaliana (Mouse-ear cress) protein is Histone-lysine N-methyltransferase ATXR2.